Consider the following 1197-residue polypeptide: ATP-dependent helicase/nuclease subunit A (1197 aa).

The 457-residue stretch at 2–458 folds into the UvrD-like helicase ATP-binding domain; that stretch reads RQWTKEQQAA…IDLAKNFRSR (457 aa). ATP is bound at residue 23-30; it reads AAAGSGKT. The region spanning 485–774 is the UvrD-like helicase C-terminal domain; it reads RAALYQGTEF…RIMSIHKSKG (290 aa).

Belongs to the helicase family. AddA subfamily. As to quaternary structure, heterodimer of AddA and AddB/RexB. Mg(2+) is required as a cofactor.

It carries out the reaction Couples ATP hydrolysis with the unwinding of duplex DNA by translocating in the 3'-5' direction.. The enzyme catalyses ATP + H2O = ADP + phosphate + H(+). Functionally, the heterodimer acts as both an ATP-dependent DNA helicase and an ATP-dependent, dual-direction single-stranded exonuclease. Recognizes the chi site generating a DNA molecule suitable for the initiation of homologous recombination. The AddA nuclease domain is required for chi fragment generation; this subunit has the helicase and 3' -&gt; 5' nuclease activities. The sequence is that of ATP-dependent helicase/nuclease subunit A from Alkaliphilus oremlandii (strain OhILAs) (Clostridium oremlandii (strain OhILAs)).